The sequence spans 446 residues: Glutamine synthetase (446 aa).

The GS beta-grasp domain maps to 15 to 102; sequence RDIRFVRLWF…MFCDITMPDG (88 aa). The GS catalytic domain maps to 109 to 446; it reads SRHVLRRQLA…PYELKNYLSL (338 aa). Glu-132 and Glu-134 together coordinate Mg(2+). Glu-184 lines the ATP pocket. Positions 189 and 196 each coordinate Mg(2+). Gly-241 serves as a coordination point for L-glutamate. Residue His-245 coordinates Mg(2+). Residues 247 to 249 and Ser-249 contribute to the ATP site; that span reads HMS. Residues Arg-298, Glu-304, and Arg-316 each contribute to the L-glutamate site. Positions 316 and 321 each coordinate ATP. Glu-336 is a Mg(2+) binding site. Arg-338 provides a ligand contact to L-glutamate. Residue Lys-363 forms an Isoglutamyl lysine isopeptide (Lys-Gln) (interchain with Q-Cter in protein Pup) linkage.

The protein belongs to the glutamine synthetase family. In terms of assembly, oligomer of 12 subunits arranged in the form of two hexagons. In its feedback-inhibited form, interacts with TnrA in order to block its DNA-binding activity. Requires Mg(2+) as cofactor.

The protein resides in the cytoplasm. The enzyme catalyses L-glutamate + NH4(+) + ATP = L-glutamine + ADP + phosphate + H(+). With respect to regulation, inhibited by glutamine. Glutamine synthetase (GS) is an unusual multitasking protein that functions as an enzyme, a transcription coregulator, and a chaperone in ammonium assimilation and in the regulation of genes involved in nitrogen metabolism. It catalyzes the ATP-dependent biosynthesis of glutamine from glutamate and ammonia. Feedback-inhibited GlnA also interacts with and regulates the activity of the transcriptional regulator TnrA. During nitrogen limitation, TnrA is in its DNA-binding active state and turns on the transcription of genes required for nitrogen assimilation. Under conditions of nitrogen excess, feedback-inhibited GlnA forms a stable complex with TnrA, which inhibits its DNA-binding activity. In contrast, feedback-inhibited GlnA acts as a chaperone to stabilize the DNA-binding activity of GlnR, which represses the transcription of nitrogen assimilation genes. In Mycolicibacterium smegmatis (strain ATCC 700084 / mc(2)155) (Mycobacterium smegmatis), this protein is Glutamine synthetase.